Here is a 1219-residue protein sequence, read N- to C-terminus: Type IV pilus biogenesis factor PilY1 homolog PD_0502 (1219 aa).

A signal peptide spans 1–35 (MVGMSRIILNNLFFFRCVVAVFSAHSLVISGAVHA). Positions 212–234 (GLSTDPLNTEGQPYDPSRHPLNS) are disordered. Ca(2+) is bound by residues Q958, N960, I962, and D964.

It belongs to the PilY1 family.

The protein localises to the fimbrium. In terms of biological role, one of the three PilY1 homologs of X.fastidiosa, which are involved in bacterial twitching motility as component of the filamentous type IV pili (T4P). The chain is Type IV pilus biogenesis factor PilY1 homolog PD_0502 from Xylella fastidiosa (strain Temecula1 / ATCC 700964).